Here is a 282-residue protein sequence, read N- to C-terminus: Putative 23S rRNA (guanine-N(1)-)-methyltransferase YxjB (282 aa).

Zn(2+) is bound by residues C12, C15, C29, and H34. 103-104 (EG) provides a ligand contact to S-adenosyl-L-methionine.

This sequence belongs to the methyltransferase superfamily. RlmA family.

The sequence is that of Putative 23S rRNA (guanine-N(1)-)-methyltransferase YxjB (yxjB) from Bacillus subtilis (strain 168).